Consider the following 64-residue polypeptide: Large ribosomal subunit protein bL35 (64 aa).

The segment covering 22–31 (GKVKHGHAYR) has biased composition (basic residues). The segment at 22-64 (GKVKHGHAYRSHLAQSKTTKQKRQSRKSTLMNNSDFKRLKKLI) is disordered.

It belongs to the bacterial ribosomal protein bL35 family.

The chain is Large ribosomal subunit protein bL35 from Mesomycoplasma hyopneumoniae (strain 232) (Mycoplasma hyopneumoniae).